Reading from the N-terminus, the 329-residue chain is DNA-directed RNA polymerase subunit alpha (329 aa).

The tract at residues 1–234 is alpha N-terminal domain (alpha-NTD); the sequence is MQGSVTEFLK…EQLDAFVELR (234 aa). Residues 248 to 329 are alpha C-terminal domain (alpha-CTD); sequence FDPILLRPVD…WPPASLADDL (82 aa).

This sequence belongs to the RNA polymerase alpha chain family. Homodimer. The RNAP catalytic core consists of 2 alpha, 1 beta, 1 beta' and 1 omega subunit. When a sigma factor is associated with the core the holoenzyme is formed, which can initiate transcription.

The enzyme catalyses RNA(n) + a ribonucleoside 5'-triphosphate = RNA(n+1) + diphosphate. Its function is as follows. DNA-dependent RNA polymerase catalyzes the transcription of DNA into RNA using the four ribonucleoside triphosphates as substrates. The chain is DNA-directed RNA polymerase subunit alpha from Shewanella loihica (strain ATCC BAA-1088 / PV-4).